Reading from the N-terminus, the 255-residue chain is 3-dehydroquinate dehydratase (255 aa).

Residues 46 to 48 and Arg82 each bind 3-dehydroquinate; that span reads EWR. His143 (proton donor/acceptor) is an active-site residue. Lys170 serves as the catalytic Schiff-base intermediate with substrate. Positions 213, 232, and 236 each coordinate 3-dehydroquinate.

This sequence belongs to the type-I 3-dehydroquinase family. Homodimer.

It carries out the reaction 3-dehydroquinate = 3-dehydroshikimate + H2O. The protein operates within metabolic intermediate biosynthesis; chorismate biosynthesis; chorismate from D-erythrose 4-phosphate and phosphoenolpyruvate: step 3/7. In terms of biological role, involved in the third step of the chorismate pathway, which leads to the biosynthesis of aromatic amino acids. Catalyzes the cis-dehydration of 3-dehydroquinate (DHQ) and introduces the first double bond of the aromatic ring to yield 3-dehydroshikimate. This Bacillus subtilis (strain 168) protein is 3-dehydroquinate dehydratase.